We begin with the raw amino-acid sequence, 304 residues long: tRNA-uridine aminocarboxypropyltransferase 1 (304 aa).

S2 carries the post-translational modification N-acetylserine. A DXTW motif is present at residues 206–209 (DSTW).

The protein belongs to the TDD superfamily. DTWD1 family.

It localises to the nucleus. It carries out the reaction a uridine in tRNA + S-adenosyl-L-methionine = a 3-[(3S)-3-amino-3-carboxypropyl]uridine in tRNA + S-methyl-5'-thioadenosine + H(+). Its function is as follows. Catalyzes the formation of 3-(3-amino-3-carboxypropyl)uridine (acp3U) at position 20 in the D-loop of several cytoplasmic tRNAs (acp3U(20)). The chain is tRNA-uridine aminocarboxypropyltransferase 1 from Pongo abelii (Sumatran orangutan).